A 245-amino-acid chain; its full sequence is MYPVDLHMHTVASTHAYSTLHDYIVEAQQKNIRLFAITDHGPDMADAPHYWHFMNMRVWPRLVDGVGILRGIEANIKNIEGDIDCTGPMLDQVDVIIAGFHEPVFPPQDKDTHTAAMIATMARGDAHIISHPGNPKFPVDIRAIAEAAAKYNVALELNNSSFIHSRQGSEPNCRAIAEAVRDAGGLLSLGSDSHIAFSLGDFTHCERILQEVNFPQDRILNVSPRRVLDFLEQRGMPAIAELADL.

Residues His7, His9, His15, His40, Glu73, His101, His131, Asp192, and His194 each coordinate Zn(2+).

It belongs to the PHP family. In terms of assembly, homotrimer. Zn(2+) serves as cofactor.

The sequence is that of Probable phosphatase ECA2529 from Pectobacterium atrosepticum (strain SCRI 1043 / ATCC BAA-672) (Erwinia carotovora subsp. atroseptica).